Reading from the N-terminus, the 138-residue chain is Basic phospholipase A2 ammodytoxin B (138 aa).

The first 16 residues, 1 to 16 (MRTLWIVAVCLIGVEG), serve as a signal peptide directing secretion. Disulfide bonds link C42/C131, C44/C60, C59/C111, C65/C138, C66/C104, C73/C97, and C91/C102. Y43, G45, and G47 together coordinate Ca(2+). H63 is an active-site residue. D64 contributes to the Ca(2+) binding site. D105 is a catalytic residue.

The protein belongs to the phospholipase A2 family. Group II subfamily. D49 sub-subfamily. In terms of assembly, monomer. Binds to calmodulin, coagulation factor X (F10), M-type PLA2 receptor (R-180), 14-3-3 proteins gamma (YWHAG) and epsilon (YWHAE), and R25, a mitochondrial membrane protein. Ca(2+) is required as a cofactor. As to expression, expressed by the venom gland.

The protein resides in the secreted. Its subcellular location is the host cytoplasm. It is found in the host cytosol. The enzyme catalyses a 1,2-diacyl-sn-glycero-3-phosphocholine + H2O = a 1-acyl-sn-glycero-3-phosphocholine + a fatty acid + H(+). In terms of biological role, snake venom phospholipase A2 (PLA2) that acts as a presynaptic neurotoxin, an inhibitor of blood coagulation, and has been found to bind with high affinity to intracellular proteins. The response of indirectly stimulated neuromuscular preparations to ammodytoxin (Atx) is triphasic. The first phase, the transient inhibition of the acetylcholine (ACh) release, starts soon after the addition of Atx and lasts for several minutes. This phase is probably independent of Atx enzymatic activity. The effect may be due to the specific binding of the toxin to presynaptic receptors. These receptors, called N-type receptors, are still unidentified. It is noteworthy that a neuronal isoform of the M-type PLA2 receptor (R180) has been identified as a high-affinity receptor for Atx in neuronal plasma membranes. It was demonstrated however that this receptor is not essential for expression of neurotoxicity by Atx. The second phase corresponds to an augmentation of neurotransmitter release. A peak is reached 10-20 minutes after exposure of the preparation to Atx and is followed by a gradual reduction. In this phase, the enzymatic activity of Atx of the mammalian is not significant. It is speculated that the increased release of neurotransmitter in this phase is induced by the interference of Atx with voltage-gated potassium channels. Measurements of ionic currents showed however that voltage-gated potassium channels are not affected by Atx. The third phase of the response of neuromuscular preparations to Atx, which corresponds to a complete and irreversible paralysis, is clearly dependent on the hydrolytic activity of the toxin. In addition to its presynaptic neurotoxicity, Atx shows an anticoagulant activity by binding with high affinity to activated coagulation factor X (F10) thus inhibiting the formation of the prothrombinase complex (FX/FV) and its activity (IC(50) is 82 nM). Surprisingly, Atx was discovered to bind intracellular proteins such as calmodulin (CaM), 14-3-3 proteins gamma (YWHAG) and epsilon (YWHAE) (by similarity with AtxC), as well as R25 (by similarity with AtxC), a mitochondrial integral membrane protein found in cerebral cortex. These findings raised a doubt about the dogma of the exclusively extracellular action of PLA2s, defended by the potential instability of these molecules in the reducing environment of the eukaryotic cytosol coupled with their possible inability to act as enzymes in this cellular compartment, due to too low concentration of calcium ions. This hypothesis was challenged efficiently by demonstrating the internalization of AtxA into a culture cells, but still remains to be directly demonstrated in vivo. PLA2 catalyzes the calcium-dependent hydrolysis of the 2-acyl groups in 3-sn-phosphoglycerides. In Vipera ammodytes ammodytes (Western sand viper), this protein is Basic phospholipase A2 ammodytoxin B.